A 261-amino-acid chain; its full sequence is tRNA pseudouridine synthase A (261 aa).

The active-site Nucleophile is D51. Position 109 (Y109) interacts with substrate.

It belongs to the tRNA pseudouridine synthase TruA family. In terms of assembly, homodimer.

It carries out the reaction uridine(38/39/40) in tRNA = pseudouridine(38/39/40) in tRNA. Functionally, formation of pseudouridine at positions 38, 39 and 40 in the anticodon stem and loop of transfer RNAs. In Shewanella baltica (strain OS185), this protein is tRNA pseudouridine synthase A.